A 258-amino-acid chain; its full sequence is Glucanase inhibitor protein 3 (258 aa).

A signal peptide spans 1–19 (MKIISAVAASSIALGAVSA). One can recognise a Peptidase S1 domain in the interval 29-256 (VLGGAVVPSG…ALEWINSITK (228 aa)). Cys56 and Cys72 are joined by a disulfide. N-linked (GlcNAc...) asparagine glycans are attached at residues Asn90, Asn105, and Asn110. 2 disulfides stabilise this stretch: Cys180–Cys192 and Cys202–Cys233.

It belongs to the peptidase S1 family. Forms an apoplastic complex with host endoglucanases in tomato leaves during P.infestans infection.

It is found in the secreted. Its function is as follows. Secreted effector that suppresses host plant glucan elicitor-mediated defense responses. Targets host endoglucanases and inhibits the endoglucanase-mediated release of elicitor-active glucan oligosaccharides from P.infestans cell walls. The protein is Glucanase inhibitor protein 3 of Phytophthora infestans (Potato late blight agent).